The following is a 514-amino-acid chain: 2-isopropylmalate synthase (514 aa).

The 264-residue stretch at 5–268 folds into the Pyruvate carboxyltransferase domain; that stretch reads LIIFDTTLRD…DVGLDTTQIV (264 aa). Mn(2+)-binding residues include Asp-14, His-202, His-204, and Asn-239. The interval 395–514 is regulatory domain; that stretch reads KFVSLSQRSE…KDDKLNPQRS (120 aa).

This sequence belongs to the alpha-IPM synthase/homocitrate synthase family. LeuA type 1 subfamily. Homodimer. It depends on Mn(2+) as a cofactor.

The protein resides in the cytoplasm. It catalyses the reaction 3-methyl-2-oxobutanoate + acetyl-CoA + H2O = (2S)-2-isopropylmalate + CoA + H(+). The protein operates within amino-acid biosynthesis; L-leucine biosynthesis; L-leucine from 3-methyl-2-oxobutanoate: step 1/4. In terms of biological role, catalyzes the condensation of the acetyl group of acetyl-CoA with 3-methyl-2-oxobutanoate (2-ketoisovalerate) to form 3-carboxy-3-hydroxy-4-methylpentanoate (2-isopropylmalate). This is 2-isopropylmalate synthase from Burkholderia ambifaria (strain ATCC BAA-244 / DSM 16087 / CCUG 44356 / LMG 19182 / AMMD) (Burkholderia cepacia (strain AMMD)).